The chain runs to 185 residues: Ribosome-recycling factor (185 aa).

It belongs to the RRF family.

The protein localises to the cytoplasm. Its function is as follows. Responsible for the release of ribosomes from messenger RNA at the termination of protein biosynthesis. May increase the efficiency of translation by recycling ribosomes from one round of translation to another. This chain is Ribosome-recycling factor, found in Clostridioides difficile (strain 630) (Peptoclostridium difficile).